A 214-amino-acid polypeptide reads, in one-letter code: Ribosomal RNA small subunit methyltransferase G (214 aa).

S-adenosyl-L-methionine is bound by residues glycine 81, methionine 86, 132 to 133, and arginine 147; that span reads VE.

Belongs to the methyltransferase superfamily. RNA methyltransferase RsmG family.

Its subcellular location is the cytoplasm. It catalyses the reaction guanosine(527) in 16S rRNA + S-adenosyl-L-methionine = N(7)-methylguanosine(527) in 16S rRNA + S-adenosyl-L-homocysteine. Its function is as follows. Specifically methylates the N7 position of guanine in position 527 of 16S rRNA. The chain is Ribosomal RNA small subunit methyltransferase G from Pseudomonas aeruginosa (strain LESB58).